The primary structure comprises 321 residues: MAVYTDVSAASLSDYLAAYDIGTLVSYHGIAEGVENSNFLVQTTTASFILTLYEKRVDPADLPFFIGLMQHLAANGISCPQPVAMRDGTMLGTLAGRPCAIVTFLPGVSVRKPTAANCGQLGRALAQLHLAGAGFEITRRNALSVSGWRPLFEAAGPRTDTVHPGLAAIITEELAAHEAHWPAALPAGVIHADLFPDNAFFLDDTLSGIIDFYFACNDLFAYDVAVCLNAWCFEADGAFNATKGRALLAGYQAVRPMEAAEVEALPQLARGAALRFLLTRLVDWLNVPEGALVRPKDPLEYLRKLRFHRAVASARDYGLAA.

The protein belongs to the pseudomonas-type ThrB family.

It catalyses the reaction L-homoserine + ATP = O-phospho-L-homoserine + ADP + H(+). Its pathway is amino-acid biosynthesis; L-threonine biosynthesis; L-threonine from L-aspartate: step 4/5. This chain is Homoserine kinase, found in Azorhizobium caulinodans (strain ATCC 43989 / DSM 5975 / JCM 20966 / LMG 6465 / NBRC 14845 / NCIMB 13405 / ORS 571).